We begin with the raw amino-acid sequence, 513 residues long: MEISGRRMRRFRMRFRRDHLTGGENIENEASCCYCDLKISNFNEPIFRLGRRFSGVLKVWFSIGLGFGVASLILVTVFLLLQFHSNPLFSNRLTSAVFGFSPSTRVSLSGIAYVLVSTVITVSVHELGHALAAASEGIQMEYIAVFIAAIFPGGLVAFDNDVLQSLPSFNALRIYCAGIWHNAVFCALCVFALFLLPVMLSPFYKHGESLTVVDVPSVSPLFGYLSPGDVIVSLDGIQVHKPSEWLELAAILDKENSKTSNGSLYLGGSRRFHHGKGYCVPISLIEEGYKGKMVENQFVCPGDLTAFRTMPCSNAAIREVSVCLDAKDIVKLQKCGDGWVTTSDTDNQSDCVCPQGDLCLQAMQSPGVLWTEITYKRTSSQDCSRLGLDFNTSNCLGTFVFVGDLIAMSHSVHLTAYQPRWLFNFFGKSFPNILERSLTCTFHVSLALVLLNSLPVYYLDGESILESSLQSFTWLSPRKKKKALQVCLVGGSLLSFLAFFRIFLLGLPLSRRW.

Topologically, residues 1 to 60 (MEISGRRMRRFRMRFRRDHLTGGENIENEASCCYCDLKISNFNEPIFRLGRRFSGVLKVW) are cytoplasmic. Residues 61-81 (FSIGLGFGVASLILVTVFLLL) form a helical membrane-spanning segment. The Lumenal segment spans residues 82 to 107 (QFHSNPLFSNRLTSAVFGFSPSTRVS). The helical transmembrane segment at 108 to 128 (LSGIAYVLVSTVITVSVHELG) threads the bilayer. His125 serves as a coordination point for Zn(2+). Glu126 is an active-site residue. His129 serves as a coordination point for Zn(2+). The Cytoplasmic portion of the chain corresponds to 129–137 (HALAAASEG). Residues 138-158 (IQMEYIAVFIAAIFPGGLVAF) form a helical membrane-spanning segment. At 159–182 (DNDVLQSLPSFNALRIYCAGIWHN) the chain is on the lumenal side. Residues 183-203 (AVFCALCVFALFLLPVMLSPF) traverse the membrane as a helical segment. Over 204–437 (YKHGESLTVV…KSFPNILERS (234 aa)) the chain is Cytoplasmic. A helical transmembrane segment spans residues 438 to 458 (LTCTFHVSLALVLLNSLPVYY). Residues 459-485 (LDGESILESSLQSFTWLSPRKKKKALQ) are Lumenal-facing. Residues 486–506 (VCLVGGSLLSFLAFFRIFLLG) form a helical membrane-spanning segment. Topologically, residues 507 to 513 (LPLSRRW) are cytoplasmic.

It belongs to the peptidase M50A family. It depends on Zn(2+) as a cofactor. Expressed in the vasculature of roots, cotyledons and leaves.

The protein localises to the golgi apparatus membrane. In terms of biological role, metalloprotease that catalyzes the second step (site-2 cleavage) in the proteolytic activation of various factors, after site-1 cleavage. Part of a regulated intramembrane proteolysis (RIP) cascade. After ER stress, cleaves BZIP17 and BZIP28 proteins which function as stress sensors and transducers in ER stress signaling pathway. The N-terminal bZIP component is translocated to the nucleus, where it activates the expression and production of ER chaperones, as well as proteins involved in brassinosteroid (BR) signaling, which is required for stress acclimation and growth. This is Membrane-bound transcription factor site-2 protease homolog (S2P) from Arabidopsis thaliana (Mouse-ear cress).